Consider the following 363-residue polypeptide: Ferrochelatase (363 aa).

2 residues coordinate Fe cation: histidine 209 and glutamate 290.

This sequence belongs to the ferrochelatase family.

The protein resides in the cytoplasm. The enzyme catalyses heme b + 2 H(+) = protoporphyrin IX + Fe(2+). It functions in the pathway porphyrin-containing compound metabolism; protoheme biosynthesis; protoheme from protoporphyrin-IX: step 1/1. Functionally, catalyzes the ferrous insertion into protoporphyrin IX. The protein is Ferrochelatase of Methylibium petroleiphilum (strain ATCC BAA-1232 / LMG 22953 / PM1).